The following is a 435-amino-acid chain: Legumain (435 aa).

The signal sequence occupies residues 1–17 (MTWRVAVLLSLVLGAGA). N-linked (GlcNAc...) asparagine glycosylation is present at Asn93. His150 is a catalytic residue. The N-linked (GlcNAc...) asparagine glycan is linked to Asn169. Cys191 serves as the catalytic Nucleophile. Residues Asn265 and Asn274 are each glycosylated (N-linked (GlcNAc...) asparagine). The propeptide occupies 326-435 (DVKESQNLIG…AMDKVCLSHY (110 aa)). Disulfide bonds link Cys380-Cys414 and Cys392-Cys431.

It belongs to the peptidase C13 family. Homodimer before autocatalytic removal of the propeptide. Monomer after autocatalytic processing. May interact with integrins. Glycosylated. In terms of processing, activated by autocatalytic processing at pH 4. As to expression, detected in kidney proximal tubules (at protein level). Ubiquitous. Particularly abundant in kidney and placenta.

The protein resides in the lysosome. It catalyses the reaction Hydrolysis of proteins and small molecule substrates at -Asn-|-Xaa- bonds.. Its activity is regulated as follows. Inhibited by cystatin-C. Functionally, has a strict specificity for hydrolysis of asparaginyl bonds. Can also cleave aspartyl bonds slowly, especially under acidic conditions. Involved in the processing of proteins for MHC class II antigen presentation in the lysosomal/endosomal system. Also involved in MHC class I antigen presentation in cross-presenting dendritic cells by mediating cleavage and maturation of Perforin-2 (MPEG1), thereby promoting antigen translocation in the cytosol. Required for normal lysosomal protein degradation in renal proximal tubules. Required for normal degradation of internalized EGFR. Plays a role in the regulation of cell proliferation via its role in EGFR degradation. The sequence is that of Legumain (Lgmn) from Mus musculus (Mouse).